Consider the following 279-residue polypeptide: Nucleotide-binding protein THA_1518 (279 aa).

Position 9-16 (9-16) interacts with ATP; sequence GLSGAGKS. Position 57 to 60 (57 to 60) interacts with GTP; sequence DARS.

It belongs to the RapZ-like family.

Displays ATPase and GTPase activities. This chain is Nucleotide-binding protein THA_1518, found in Thermosipho africanus (strain TCF52B).